Consider the following 245-residue polypeptide: uncharacterized protein (245 aa).

The stretch at 33–176 (QRAAYQQVQA…SSQRDMLTAT (144 aa)) forms a coiled coil.

This is an uncharacterized protein from Mycobacterium tuberculosis (strain CDC 1551 / Oshkosh).